Consider the following 462-residue polypeptide: Adenylosuccinate lyase (462 aa).

N(6)-(1,2-dicarboxyethyl)-AMP is bound by residues 21-22 (RY), 87-89 (KHD), and 114-115 (TS). The active-site Proton donor/acceptor is the His-162. A N(6)-(1,2-dicarboxyethyl)-AMP-binding site is contributed by Gln-236. Ser-287 (proton donor/acceptor) is an active-site residue. N(6)-(1,2-dicarboxyethyl)-AMP contacts are provided by residues Ser-288, 293-295 (KRN), and 332-336 (SAERC).

The protein belongs to the lyase 1 family. Adenylosuccinate lyase subfamily. Homotetramer. Residues from neighboring subunits contribute catalytic and substrate-binding residues to each active site.

The enzyme catalyses N(6)-(1,2-dicarboxyethyl)-AMP = fumarate + AMP. It carries out the reaction (2S)-2-[5-amino-1-(5-phospho-beta-D-ribosyl)imidazole-4-carboxamido]succinate = 5-amino-1-(5-phospho-beta-D-ribosyl)imidazole-4-carboxamide + fumarate. Its pathway is purine metabolism; AMP biosynthesis via de novo pathway; AMP from IMP: step 2/2. It functions in the pathway purine metabolism; IMP biosynthesis via de novo pathway; 5-amino-1-(5-phospho-D-ribosyl)imidazole-4-carboxamide from 5-amino-1-(5-phospho-D-ribosyl)imidazole-4-carboxylate: step 2/2. Catalyzes two reactions in de novo purine nucleotide biosynthesis. Catalyzes the breakdown of 5-aminoimidazole- (N-succinylocarboxamide) ribotide (SAICAR or 2-[5-amino-1-(5-phospho-beta-D-ribosyl)imidazole-4-carboxamido]succinate) to 5-aminoimidazole-4-carboxamide ribotide (AICAR or 5-amino-1-(5-phospho-beta-D-ribosyl)imidazole-4-carboxamide) and fumarate, and of adenylosuccinate (ADS or N(6)-(1,2-dicarboxyethyl)-AMP) to adenosine monophosphate (AMP) and fumarate. The protein is Adenylosuccinate lyase (purB) of Methanocaldococcus jannaschii (strain ATCC 43067 / DSM 2661 / JAL-1 / JCM 10045 / NBRC 100440) (Methanococcus jannaschii).